Reading from the N-terminus, the 124-residue chain is Small ribosomal subunit protein bS16 (124 aa).

Positions 82–124 (LAKRPARSNPTKAVPGKKAQERAAEAKQKAEDAAAAAAESAAE) are disordered. Residues 99-113 (KAQERAAEAKQKAED) are compositionally biased toward basic and acidic residues. The segment covering 114 to 124 (AAAAAAESAAE) has biased composition (low complexity).

This sequence belongs to the bacterial ribosomal protein bS16 family.

The protein is Small ribosomal subunit protein bS16 of Sinorhizobium fredii (strain NBRC 101917 / NGR234).